Reading from the N-terminus, the 123-residue chain is Large ribosomal subunit protein bL19 (123 aa).

It belongs to the bacterial ribosomal protein bL19 family.

Functionally, this protein is located at the 30S-50S ribosomal subunit interface and may play a role in the structure and function of the aminoacyl-tRNA binding site. The sequence is that of Large ribosomal subunit protein bL19 from Bdellovibrio bacteriovorus (strain ATCC 15356 / DSM 50701 / NCIMB 9529 / HD100).